A 224-amino-acid polypeptide reads, in one-letter code: Ribonuclease T (224 aa).

One can recognise an Exonuclease domain in the interval 32-206 (VVVDVETGGF…YDTEKTAELF (175 aa)). Mg(2+)-binding residues include Asp-35, Glu-37, His-193, and Asp-198. The active-site Proton donor/acceptor is the His-193.

This sequence belongs to the RNase T family. Homodimer. Requires Mg(2+) as cofactor.

Functionally, trims short 3' overhangs of a variety of RNA species, leaving a one or two nucleotide 3' overhang. Responsible for the end-turnover of tRNA: specifically removes the terminal AMP residue from uncharged tRNA (tRNA-C-C-A). Also appears to be involved in tRNA biosynthesis. This is Ribonuclease T from Pseudomonas aeruginosa (strain UCBPP-PA14).